The following is a 99-amino-acid chain: Plastocyanin (99 aa).

The 99-residue stretch at 1–99 (AEVLLGSSDG…AGMVGKVTVN (99 aa)) folds into the Plastocyanin-like domain. Residues His-37, Cys-84, His-87, and Met-92 each contribute to the Cu cation site.

This sequence belongs to the plastocyanin family. Cu(2+) is required as a cofactor.

The protein localises to the plastid. Its subcellular location is the chloroplast thylakoid membrane. Functionally, participates in electron transfer between P700 and the cytochrome b6-f complex in photosystem I. The protein is Plastocyanin (PETE) of Lactuca sativa (Garden lettuce).